A 141-amino-acid chain; its full sequence is VLTAEDKKLIQQTWGKLGGAEEEIGAEALWRMFHAYPPTKTYFPHFDLSQGSDQIRGHGKKVVAALGNAIKNLDNLSQALSELSNLHAYNLRVDPVNFKFLSQCLQVTLATRLGKEYSPEVHSAVDKFMSAVAAVLAEKYR.

The Globin domain occupies 1 to 141; sequence VLTAEDKKLI…VAAVLAEKYR (141 aa). Heme b contacts are provided by histidine 58 and histidine 87.

This sequence belongs to the globin family. In terms of assembly, heterotetramer of two alpha-D chains and two beta chains. In terms of tissue distribution, red blood cells.

Functionally, involved in oxygen transport from the lung to the various peripheral tissues. The protein is Hemoglobin subunit alpha-D (HBAD) of Sturnus vulgaris (Starling).